Here is a 129-residue protein sequence, read N- to C-terminus: Replication initiation control protein YabA (129 aa).

Residues H103, C105, C119, and C122 each coordinate Zn(2+).

This sequence belongs to the YabA family. In terms of assembly, homotetramer. Interacts with both DnaA and DnaN, acting as a bridge between these two proteins. Requires Zn(2+) as cofactor.

Its subcellular location is the cytoplasm. The protein localises to the nucleoid. Involved in control of chromosome replication initiation. Inhibits the cooperative binding of DnaA to the oriC region, thus negatively regulating initiation of chromosome replication. Inhibits the ability of DnaA-ATP to form a helix on DNA; does not disassemble preformed DnaA-DNA helices. Decreases the residence time of DnaA on the chromosome at its binding sites (oriC, replication forks and promoter-binding sites). Tethers DnaA to the replication machinery via the DNA polymerase beta sliding clamp subunit (dnaN). Associates with oriC and other DnaA targets on the chromosome in a DnaA-dependent manner. The protein is Replication initiation control protein YabA of Listeria innocua serovar 6a (strain ATCC BAA-680 / CLIP 11262).